A 333-amino-acid polypeptide reads, in one-letter code: MNIGVIGAGSWGTTLADLLSKNGHAVTLWAYEQDLVERMRKSAKNDLYLPDFTLHEKLAYSSDLGEVAAGKDMVVLVAPSQVLRAVVRQAEPHLAKDTILVSAAKGIENDTLMPMSEVLKEVLPEERLQRAAYLSGPTFAREVAAEIPTALTVASEDENIARTVQKIFSCEYFRVYRSSDIVGVELGGALKNVIALAAGISDGLGYGYNARAALITRGLAEMTRIGVAMVARERTFMGLSGMGDLVLTCTGDLSRNRSVGLELGRGRKLEDILSGMRMVAEGVKTTLSAYQLAKRLGVETPIIEQMYLILFENKDPRDAVADLMQRSLKAEMD.

Positions 10, 11, and 105 each coordinate NADPH. The sn-glycerol 3-phosphate site is built by Lys-105, Gly-136, and Thr-138. Ala-140 contributes to the NADPH binding site. Residues Lys-191, Asp-244, Ser-254, Arg-255, and Asn-256 each coordinate sn-glycerol 3-phosphate. Lys-191 (proton acceptor) is an active-site residue. Position 255 (Arg-255) interacts with NADPH. The NADPH site is built by Val-279 and Glu-281.

The protein belongs to the NAD-dependent glycerol-3-phosphate dehydrogenase family.

It is found in the cytoplasm. The catalysed reaction is sn-glycerol 3-phosphate + NAD(+) = dihydroxyacetone phosphate + NADH + H(+). It catalyses the reaction sn-glycerol 3-phosphate + NADP(+) = dihydroxyacetone phosphate + NADPH + H(+). The protein operates within membrane lipid metabolism; glycerophospholipid metabolism. Its function is as follows. Catalyzes the reduction of the glycolytic intermediate dihydroxyacetone phosphate (DHAP) to sn-glycerol 3-phosphate (G3P), the key precursor for phospholipid synthesis. This Syntrophotalea carbinolica (strain DSM 2380 / NBRC 103641 / GraBd1) (Pelobacter carbinolicus) protein is Glycerol-3-phosphate dehydrogenase [NAD(P)+].